A 509-amino-acid chain; its full sequence is 2,3-bisphosphoglycerate-independent phosphoglycerate mutase (509 aa).

Mn(2+)-binding residues include aspartate 12 and serine 62. Serine 62 acts as the Phosphoserine intermediate in catalysis. Substrate is bound by residues histidine 123, 153-154 (RD), arginine 185, arginine 191, 260-263 (RPDR), and lysine 333. Aspartate 400, histidine 404, aspartate 441, histidine 442, and histidine 460 together coordinate Mn(2+).

The protein belongs to the BPG-independent phosphoglycerate mutase family. In terms of assembly, monomer. It depends on Mn(2+) as a cofactor.

It catalyses the reaction (2R)-2-phosphoglycerate = (2R)-3-phosphoglycerate. It participates in carbohydrate degradation; glycolysis; pyruvate from D-glyceraldehyde 3-phosphate: step 3/5. Functionally, catalyzes the interconversion of 2-phosphoglycerate and 3-phosphoglycerate. This chain is 2,3-bisphosphoglycerate-independent phosphoglycerate mutase, found in Clostridium kluyveri (strain ATCC 8527 / DSM 555 / NBRC 12016 / NCIMB 10680 / K1).